The following is a 337-amino-acid chain: Fructose-1,6-bisphosphatase class 1 (337 aa).

Mg(2+) is bound by residues E94, D116, L118, and D119. Residues 119-122 (DGSS), N210, and K276 each bind substrate. E282 serves as a coordination point for Mg(2+).

The protein belongs to the FBPase class 1 family. Homotetramer. Mg(2+) is required as a cofactor.

The protein localises to the cytoplasm. The enzyme catalyses beta-D-fructose 1,6-bisphosphate + H2O = beta-D-fructose 6-phosphate + phosphate. The protein operates within carbohydrate biosynthesis; gluconeogenesis. The protein is Fructose-1,6-bisphosphatase class 1 of Burkholderia orbicola (strain MC0-3).